Reading from the N-terminus, the 399-residue chain is Glutathione S-transferase LANCL1 (399 aa).

N-acetylalanine is present on Ala2. Lys142 bears the N6-acetyllysine mark. Cys276 serves as a coordination point for Zn(2+). Lys317 lines the glutathione pocket. Positions 322 and 323 each coordinate Zn(2+). 364–367 contacts glutathione; sequence RTPD.

This sequence belongs to the LanC-like protein family. In terms of assembly, interacts with the C-terminal of STOM. Interacts with the EPS8 SH3 domain. Interaction with EPS8 is inhibited by glutathione binding. As to quaternary structure, (Microbial infection) Interacts with P.falciparum SBP1. Detected in erythrocytes, brain, kidney, testis, ovary, heart, lung, placenta and spleen (at protein level). Ubiquitous. Strongly expressed in brain, spinal cord, pituitary gland, kidney, heart, skeletal muscle, pancreas, ovary and testis.

The protein resides in the cytoplasm. Its subcellular location is the cell membrane. It catalyses the reaction RX + glutathione = an S-substituted glutathione + a halide anion + H(+). It carries out the reaction 1-chloro-2,4-dinitrobenzene + glutathione = 2,4-dinitrophenyl-S-glutathione + chloride + H(+). In terms of biological role, functions as a glutathione transferase. Catalyzes conjugation of the glutathione (GSH) to artificial substrates 1-chloro-2,4-dinitrobenzene (CDNB) and p-nitrophenyl acetate. Mitigates neuronal oxidative stress during normal postnatal development and in response to oxidative stresses probably through GSH antioxidant defense mechanism. May play a role in EPS8 signaling. Binds glutathione. The sequence is that of Glutathione S-transferase LANCL1 from Homo sapiens (Human).